A 411-amino-acid polypeptide reads, in one-letter code: Probable UDP-arabinose 4-epimerase 3 (411 aa).

Positions 1–13 (MLSFSRARSQGRN) are enriched in polar residues. The disordered stretch occupies residues 1-22 (MLSFSRARSQGRNTRPLGGGME). At 1-31 (MLSFSRARSQGRNTRPLGGGMEYLEPKRKSN) the chain is on the cytoplasmic side. Residues 32–50 (VMGKIILVVSLTALCIFML) traverse the membrane as a helical; Signal-anchor for type II membrane protein segment. Over 51–411 (KHAPSFTSPT…KTHPHGYASS (361 aa)) the chain is Lumenal. 71–102 (HVLVTGGAGYIGSHAALRLLKDSYRVTIVDNL) lines the NAD(+) pocket. The active-site Proton acceptor is the tyrosine 219.

Belongs to the NAD(P)-dependent epimerase/dehydratase family. Requires NAD(+) as cofactor.

Its subcellular location is the golgi apparatus. It localises to the golgi stack membrane. It carries out the reaction UDP-beta-L-arabinopyranose = UDP-alpha-D-xylose. It participates in nucleotide-sugar biosynthesis; UDP-L-arabinose biosynthesis; UDP-L-arabinose from UDP-alpha-D-xylose: step 1/1. The protein operates within cell wall biogenesis; cell wall polysaccharide biosynthesis. In Arabidopsis thaliana (Mouse-ear cress), this protein is Probable UDP-arabinose 4-epimerase 3.